A 262-amino-acid polypeptide reads, in one-letter code: 5'-nucleotidase SurE (262 aa).

Asp8, Asp9, Ser39, and Asn91 together coordinate a divalent metal cation.

This sequence belongs to the SurE nucleotidase family. The cofactor is a divalent metal cation.

Its subcellular location is the cytoplasm. The catalysed reaction is a ribonucleoside 5'-phosphate + H2O = a ribonucleoside + phosphate. Its function is as follows. Nucleotidase that shows phosphatase activity on nucleoside 5'-monophosphates. The chain is 5'-nucleotidase SurE from Geobacter sulfurreducens (strain ATCC 51573 / DSM 12127 / PCA).